The chain runs to 354 residues: Uroporphyrinogen decarboxylase (354 aa).

Residues 27–31, Asp77, Tyr154, Ser209, and His327 contribute to the substrate site; that span reads RQAGR.

It belongs to the uroporphyrinogen decarboxylase family. In terms of assembly, homodimer.

It localises to the cytoplasm. The enzyme catalyses uroporphyrinogen III + 4 H(+) = coproporphyrinogen III + 4 CO2. Its pathway is porphyrin-containing compound metabolism; protoporphyrin-IX biosynthesis; coproporphyrinogen-III from 5-aminolevulinate: step 4/4. Catalyzes the decarboxylation of four acetate groups of uroporphyrinogen-III to yield coproporphyrinogen-III. This chain is Uroporphyrinogen decarboxylase, found in Shewanella frigidimarina (strain NCIMB 400).